Reading from the N-terminus, the 141-residue chain is Protein E6 (141 aa).

Zinc fingers lie at residues 27 to 64 (CRFC…CSSC) and 101 to 137 (CQYC…CRHC).

This sequence belongs to the papillomaviridae E6 protein family. In terms of assembly, forms homodimers. Interacts with ubiquitin-protein ligase UBE3A/E6-AP; this interaction stimulates UBE3A ubiquitin activity. Interacts with host BAK1.

Its subcellular location is the host cytoplasm. It localises to the host nucleus. Functionally, plays a major role in the induction and maintenance of cellular transformation. E6 associates with host UBE3A/E6-AP ubiquitin-protein ligase and modulates its activity. Protects host keratinocytes from apoptosis by mediating the degradation of host BAK1. May also inhibit host immune response. The chain is Protein E6 from Homo sapiens (Human).